A 283-amino-acid polypeptide reads, in one-letter code: Probable endonuclease 4 (283 aa).

9 residues coordinate Zn(2+): histidine 66, histidine 106, glutamate 141, aspartate 174, histidine 177, histidine 211, aspartate 224, histidine 226, and glutamate 256.

Belongs to the AP endonuclease 2 family. Zn(2+) serves as cofactor.

The enzyme catalyses Endonucleolytic cleavage to 5'-phosphooligonucleotide end-products.. Endonuclease IV plays a role in DNA repair. It cleaves phosphodiester bonds at apurinic or apyrimidinic (AP) sites, generating a 3'-hydroxyl group and a 5'-terminal sugar phosphate. This is Probable endonuclease 4 from Carboxydothermus hydrogenoformans (strain ATCC BAA-161 / DSM 6008 / Z-2901).